We begin with the raw amino-acid sequence, 234 residues long: Eukaryotic translation initiation factor 3 subunit K (234 aa).

The PCI domain maps to 46–219; sequence SDIEANLALL…EAKPATTTES (174 aa).

This sequence belongs to the eIF-3 subunit K family. As to quaternary structure, component of the eukaryotic translation initiation factor 3 (eIF-3) complex.

It localises to the cytoplasm. Component of the eukaryotic translation initiation factor 3 (eIF-3) complex, which is involved in protein synthesis of a specialized repertoire of mRNAs and, together with other initiation factors, stimulates binding of mRNA and methionyl-tRNAi to the 40S ribosome. The eIF-3 complex specifically targets and initiates translation of a subset of mRNAs involved in cell proliferation. This Yarrowia lipolytica (strain CLIB 122 / E 150) (Yeast) protein is Eukaryotic translation initiation factor 3 subunit K.